Reading from the N-terminus, the 827-residue chain is WD repeat-containing protein 27 (827 aa).

WD repeat units lie at residues 3–57 (NPQD…IWNT), 62–101 (HQLL…MWNL), 112–151 (LVPR…MLDI), 155–194 (AVRA…VWDH), 201–237 (YSSS…IFSL), 292–337 (FPVL…LANL), 344–387 (YYKD…VLEI), 502–542 (KPGP…VFDA), 546–584 (GTPA…MWSA), 590–629 (ALLL…RYHI), 646–687 (KLIC…VFDL), 698–740 (EAHS…LWDL), 746–784 (ERHF…VYEM), and 788–826 (TFSH…LFLA).

The chain is WD repeat-containing protein 27 (WDR27) from Homo sapiens (Human).